The chain runs to 202 residues: Putative NAD(P)H nitroreductase YodC (202 aa).

Residues Arg11–Ser13, Gln68–Gln70, Gly155–Gly156, and Arg192 each bind FMN.

The protein belongs to the nitroreductase family. FMN serves as cofactor.

The protein resides in the cytoplasm. Putative nitroreductase that may contribute to the degradation of aromatic compounds. The protein is Putative NAD(P)H nitroreductase YodC (yodC) of Bacillus subtilis (strain 168).